We begin with the raw amino-acid sequence, 620 residues long: Probable serine/threonine-protein kinase RTK1 (620 aa).

Disordered regions lie at residues 1–20 (MVKE…SLFR), 29–130 (AKIF…PVRT), 153–186 (KDAF…SNLS), 210–237 (QAST…KKKS), and 252–271 (HDNH…TKPK). The segment covering 7–18 (LHSSSSTSLSSL) has biased composition (low complexity). Residues 56-76 (KNTDSDQEDQIKYNKPNDRRS) are compositionally biased toward basic and acidic residues. Position 58 is a phosphothreonine (Thr58). At Ser60 the chain carries Phosphoserine. 3 stretches are compositionally biased toward polar residues: residues 95 to 107 (VASS…SPTS), 165 to 186 (TAHS…SNLS), and 210 to 222 (QAST…LQHN). At Ser216 the chain carries Phosphoserine. Residues 254-263 (NHHHHHHHNR) are compositionally biased toward basic residues. The region spanning 302 to 575 (GIPGRKLGEG…MNDVVKDDWL (274 aa)) is the Protein kinase domain. ATP is bound by residues 308–316 (LGEGASGSV) and Lys330. A Glycyl lysine isopeptide (Lys-Gly) (interchain with G-Cter in ubiquitin) cross-link involves residue Lys334. Residue Asp430 is the Proton acceptor of the active site.

This sequence belongs to the protein kinase superfamily. Ser/Thr protein kinase family. Interacts with ribosome biogenesis factors ARC1, CKA2 and GUS1.

The catalysed reaction is L-seryl-[protein] + ATP = O-phospho-L-seryl-[protein] + ADP + H(+). It catalyses the reaction L-threonyl-[protein] + ATP = O-phospho-L-threonyl-[protein] + ADP + H(+). Functionally, probable serine/threonine-protein kinase that may be involved in ribosome biogenesis. The sequence is that of Probable serine/threonine-protein kinase RTK1 (RTK1) from Saccharomyces cerevisiae (strain ATCC 204508 / S288c) (Baker's yeast).